Consider the following 126-residue polypeptide: Small ribosomal subunit protein uS12m (126 aa).

2 disordered regions span residues 1–27 (MPTM…LNKC) and 106–126 (GIPG…KDYI). Composition is skewed to basic residues over residues 12 to 23 (RESKRRTKRTRA) and 109 to 120 (GRRRGRSKYGTK).

This sequence belongs to the universal ribosomal protein uS12 family.

It is found in the mitochondrion. Its function is as follows. Protein S12 is involved in the translation initiation step. In Marchantia polymorpha (Common liverwort), this protein is Small ribosomal subunit protein uS12m (RPS12).